A 254-amino-acid chain; its full sequence is tRNA (guanine-N(1)-)-methyltransferase (254 aa).

Residues glycine 114 and 134–139 (IGDYVL) each bind S-adenosyl-L-methionine.

The protein belongs to the RNA methyltransferase TrmD family. In terms of assembly, homodimer.

The protein localises to the cytoplasm. The catalysed reaction is guanosine(37) in tRNA + S-adenosyl-L-methionine = N(1)-methylguanosine(37) in tRNA + S-adenosyl-L-homocysteine + H(+). In terms of biological role, specifically methylates guanosine-37 in various tRNAs. The polypeptide is tRNA (guanine-N(1)-)-methyltransferase (Desulforamulus reducens (strain ATCC BAA-1160 / DSM 100696 / MI-1) (Desulfotomaculum reducens)).